The sequence spans 192 residues: UPF0312 protein PputW619_0484 (192 aa).

A signal peptide spans 1–23 (MLKKTFAALALGTALLSAGQAMA).

Belongs to the UPF0312 family. Type 1 subfamily.

It is found in the periplasm. This Pseudomonas putida (strain W619) protein is UPF0312 protein PputW619_0484.